A 212-amino-acid polypeptide reads, in one-letter code: Octanoyltransferase (212 aa).

The BPL/LPL catalytic domain occupies 30–205 (ETTVDELWCL…ELVEGLGHSQ (176 aa)). Substrate contacts are provided by residues 69 to 76 (RGGQVTYH), 136 to 138 (SLG), and 149 to 151 (GLA). Residue C167 is the Acyl-thioester intermediate of the active site.

This sequence belongs to the LipB family.

The protein localises to the cytoplasm. It carries out the reaction octanoyl-[ACP] + L-lysyl-[protein] = N(6)-octanoyl-L-lysyl-[protein] + holo-[ACP] + H(+). It functions in the pathway protein modification; protein lipoylation via endogenous pathway; protein N(6)-(lipoyl)lysine from octanoyl-[acyl-carrier-protein]: step 1/2. Functionally, catalyzes the transfer of endogenously produced octanoic acid from octanoyl-acyl-carrier-protein onto the lipoyl domains of lipoate-dependent enzymes. Lipoyl-ACP can also act as a substrate although octanoyl-ACP is likely to be the physiological substrate. This is Octanoyltransferase from Marinobacter nauticus (strain ATCC 700491 / DSM 11845 / VT8) (Marinobacter aquaeolei).